We begin with the raw amino-acid sequence, 159 residues long: MINLIPMTVRGAEKLREELEQLKNVKRPRITVQIAEARKHGDLKENAEYHSAREEQSFCEGRIQEIESKLSNSQIIDITKISNDGRVVFGSTVTILNIKNNAVFTYQIVGDDESDFKKNLISINSPMSRGLIGKTVNTIAIIHTPSGNVKYKILKIDYI.

Residues 7 to 72 are a coiled coil; the sequence is MTVRGAEKLR…IQEIESKLSN (66 aa).

This sequence belongs to the GreA/GreB family.

Functionally, necessary for efficient RNA polymerase transcription elongation past template-encoded arresting sites. The arresting sites in DNA have the property of trapping a certain fraction of elongating RNA polymerases that pass through, resulting in locked ternary complexes. Cleavage of the nascent transcript by cleavage factors such as GreA or GreB allows the resumption of elongation from the new 3'terminus. GreA releases sequences of 2 to 3 nucleotides. This Buchnera aphidicola subsp. Schizaphis graminum (strain Sg) protein is Transcription elongation factor GreA.